The following is a 193-amino-acid chain: Large ribosomal subunit protein bL25 (193 aa).

Belongs to the bacterial ribosomal protein bL25 family. CTC subfamily. In terms of assembly, part of the 50S ribosomal subunit; part of the 5S rRNA/L5/L18/L25 subcomplex. Contacts the 5S rRNA. Binds to the 5S rRNA independently of L5 and L18.

This is one of the proteins that binds to the 5S RNA in the ribosome where it forms part of the central protuberance. This is Large ribosomal subunit protein bL25 from Hydrogenovibrio crunogenus (strain DSM 25203 / XCL-2) (Thiomicrospira crunogena).